The chain runs to 338 residues: Queuosine 5'-phosphate N-glycosylase/hydrolase (338 aa).

M1 bears the N-acetylmethionine mark. The queuine site is built by H51, F235, D237, D311, Y312, and D316. Catalysis depends on D237, which acts as the Nucleophile or transition state stabilizer.

Belongs to the QNG1 protein family. As to expression, highly expressed in liver.

The catalysed reaction is queuosine 5'-phosphate + H2O = queuine + D-ribose 5-phosphate. Functionally, catalyzes the hydrolysis of queuosine 5'-phosphate, releasing the nucleobase queuine (q). Is required for salvage of queuine from exogenous queuosine (Q) that is imported and then converted to queuosine 5'-phosphate intracellularly. This chain is Queuosine 5'-phosphate N-glycosylase/hydrolase, found in Mus musculus (Mouse).